Here is a 357-residue protein sequence, read N- to C-terminus: Protein RecA (357 aa).

67–74 (GPESSGKT) contributes to the ATP binding site. The tract at residues 334-357 (ELKPAAAGNSHDEDELAGEGKEEF) is disordered.

This sequence belongs to the RecA family.

It localises to the cytoplasm. In terms of biological role, can catalyze the hydrolysis of ATP in the presence of single-stranded DNA, the ATP-dependent uptake of single-stranded DNA by duplex DNA, and the ATP-dependent hybridization of homologous single-stranded DNAs. It interacts with LexA causing its activation and leading to its autocatalytic cleavage. This is Protein RecA from Pectobacterium atrosepticum (strain SCRI 1043 / ATCC BAA-672) (Erwinia carotovora subsp. atroseptica).